A 389-amino-acid chain; its full sequence is S-adenosylmethionine synthase (389 aa).

Residue His15 coordinates ATP. A Mg(2+)-binding site is contributed by Asp17. Residue Glu43 coordinates K(+). Residues Glu56 and Gln99 each contribute to the L-methionine site. The segment at 99 to 109 (QSPDIAQGVNE) is flexible loop. ATP is bound by residues 166–168 (DAK), 234–235 (RF), Asp243, 249–250 (RK), Ala266, and Lys270. Asp243 is an L-methionine binding site. Lys274 serves as a coordination point for L-methionine.

Belongs to the AdoMet synthase family. Homotetramer; dimer of dimers. The cofactor is Mg(2+). K(+) is required as a cofactor.

The protein resides in the cytoplasm. It catalyses the reaction L-methionine + ATP + H2O = S-adenosyl-L-methionine + phosphate + diphosphate. It functions in the pathway amino-acid biosynthesis; S-adenosyl-L-methionine biosynthesis; S-adenosyl-L-methionine from L-methionine: step 1/1. Functionally, catalyzes the formation of S-adenosylmethionine (AdoMet) from methionine and ATP. The overall synthetic reaction is composed of two sequential steps, AdoMet formation and the subsequent tripolyphosphate hydrolysis which occurs prior to release of AdoMet from the enzyme. This chain is S-adenosylmethionine synthase, found in Chromobacterium violaceum (strain ATCC 12472 / DSM 30191 / JCM 1249 / CCUG 213 / NBRC 12614 / NCIMB 9131 / NCTC 9757 / MK).